Consider the following 346-residue polypeptide: Small ribosomal subunit biogenesis GTPase RsgA 1 (346 aa).

One can recognise a CP-type G domain in the interval 93-248; sequence AEQLIAANFD…VIDTPGMREF (156 aa). Residues 138-141 and 190-198 each bind GTP; these read TKAD and GSSGVGKSS. Residues C271, C276, H278, and C284 each contribute to the Zn(2+) site.

This sequence belongs to the TRAFAC class YlqF/YawG GTPase family. RsgA subfamily. Monomer. Associates with 30S ribosomal subunit, binds 16S rRNA. Requires Zn(2+) as cofactor.

It is found in the cytoplasm. Its function is as follows. One of several proteins that assist in the late maturation steps of the functional core of the 30S ribosomal subunit. Helps release RbfA from mature subunits. May play a role in the assembly of ribosomal proteins into the subunit. Circularly permuted GTPase that catalyzes slow GTP hydrolysis, GTPase activity is stimulated by the 30S ribosomal subunit. This chain is Small ribosomal subunit biogenesis GTPase RsgA 1, found in Listeria monocytogenes serovar 1/2a (strain ATCC BAA-679 / EGD-e).